The chain runs to 376 residues: D-alanine--D-alanine ligase (376 aa).

The region spanning 153 to 366 is the ATP-grasp domain; the sequence is KLLLAGQGLP…YPELVHRLIQ (214 aa). An ATP-binding site is contributed by 185 to 240; sequence VEALGYPVFVKPARAGSSIGITRVTSREGLAAAVAEAVSHDPKVVVEAALVGREIE. Mg(2+) is bound by residues D317, E333, and N335.

This sequence belongs to the D-alanine--D-alanine ligase family. It depends on Mg(2+) as a cofactor. The cofactor is Mn(2+).

The protein localises to the cytoplasm. The enzyme catalyses 2 D-alanine + ATP = D-alanyl-D-alanine + ADP + phosphate + H(+). Its pathway is cell wall biogenesis; peptidoglycan biosynthesis. In terms of biological role, cell wall formation. The sequence is that of D-alanine--D-alanine ligase from Kineococcus radiotolerans (strain ATCC BAA-149 / DSM 14245 / SRS30216).